A 72-amino-acid chain; its full sequence is Translation initiation factor IF-1 (72 aa).

In terms of domain architecture, S1-like spans methionine 1–lysine 72.

The protein belongs to the IF-1 family. As to quaternary structure, component of the 30S ribosomal translation pre-initiation complex which assembles on the 30S ribosome in the order IF-2 and IF-3, IF-1 and N-formylmethionyl-tRNA(fMet); mRNA recruitment can occur at any time during PIC assembly.

It localises to the cytoplasm. One of the essential components for the initiation of protein synthesis. Stabilizes the binding of IF-2 and IF-3 on the 30S subunit to which N-formylmethionyl-tRNA(fMet) subsequently binds. Helps modulate mRNA selection, yielding the 30S pre-initiation complex (PIC). Upon addition of the 50S ribosomal subunit IF-1, IF-2 and IF-3 are released leaving the mature 70S translation initiation complex. In Levilactobacillus brevis (strain ATCC 367 / BCRC 12310 / CIP 105137 / JCM 1170 / LMG 11437 / NCIMB 947 / NCTC 947) (Lactobacillus brevis), this protein is Translation initiation factor IF-1.